The following is a 466-amino-acid chain: Zinc finger protein NUTCRACKER (466 aa).

Residues 1-23 (MTSEVLQTISSGSGFAQPQSSST) show a composition bias toward polar residues. A disordered region spans residues 1–29 (MTSEVLQTISSGSGFAQPQSSSTLDHDES). Ser-56 carries the post-translational modification Phosphoserine. The segment at 66 to 88 (FLCEVCGKGFQRDQNLQLHRRGH) adopts a C2H2-type 1 zinc-finger fold. Thr-98 carries the phosphothreonine; by KIN10 modification. The C2H2-type 2 zinc finger occupies 107–137 (YVCPEKTCVHHHSSRALGDLTGIKKHFCRKH). The short motif at 134 to 141 (CRKHGEKK) is the Nuclear localization signal element. A C2H2-type 2; degenerate zinc finger spans residues 142-165 (WTCEKCAKRYAVQSDWKAHSKTCG). Cys-144, Cys-147, His-160, Cys-164, Cys-171, and Cys-173 together coordinate Zn(2+). The segment at 169-192 (YRCDCGTIFSRRDSFITHRAFCDA) adopts a CCHC-type 2; atypical zinc-finger fold. Phosphoserine; by KIN10 is present on residues Ser-178 and Ser-182. The segment at 179–191 (RRDSFITHRAFCD) is SHR-binding. Zn(2+) is bound by residues His-186 and Cys-190.

Interacts with AKIN10. Post-translationally, inhibition of transcription factor activity by KIN10-mediated phosphorylation at Thr-98, Ser-178 and Ser-182 under sugar deprivation conditions, thus delaying flowering. In terms of tissue distribution, highly expressed in vegetative organs and at lower levels in flowers and siliques. Expressed predominantly in roots. In roots, present in cortex, endodermis, and pericycle layer.

The protein resides in the nucleus. In terms of biological role, transcription activator that binds to the DNA sequence 5'-CTTTTGTCC-3'. Regulates photoperiodic flowering by modulating sugar transport and metabolism. Regulates SUS1 and SUS4. Transcription factor that regulates tissue boundaries and asymmetric cell division. Contributes to the sequestration of 'SHORT-ROOT' to the nucleus. The polypeptide is Zinc finger protein NUTCRACKER (Arabidopsis thaliana (Mouse-ear cress)).